A 178-amino-acid polypeptide reads, in one-letter code: Methylmalonyl-CoA epimerase, mitochondrial (178 aa).

The transit peptide at 1 to 38 (MRRVVKAAALAAGATGLFSRVQTSVAIGRSFSTPQSQF) directs the protein to the mitochondrion. Residues 49-178 (RLNHVAVAVP…GGVLVELEQA (130 aa)) form the VOC domain. His-52 lines the Co(2+) pocket. Lys-116 carries the post-translational modification N6-succinyllysine. His-124 contacts Co(2+). Position 152 is an N6-acetyllysine; alternate (Lys-152). The residue at position 152 (Lys-152) is an N6-succinyllysine; alternate. A Co(2+)-binding site is contributed by Glu-174.

This sequence belongs to the methylmalonyl-CoA epimerase family.

Its subcellular location is the mitochondrion. It carries out the reaction (R)-methylmalonyl-CoA = (S)-methylmalonyl-CoA. In terms of biological role, methylmalonyl-CoA epimerase involved in propionyl-CoA metabolism. The protein is Methylmalonyl-CoA epimerase, mitochondrial of Mus musculus (Mouse).